The following is a 218-amino-acid chain: Ribonuclease HII (218 aa).

Residues 24-218 (ESIAGVDEVG…KLFAVNGSLT (195 aa)) enclose the RNase H type-2 domain. A divalent metal cation-binding residues include Asp-30, Glu-31, and Asp-126.

It belongs to the RNase HII family. Mn(2+) serves as cofactor. It depends on Mg(2+) as a cofactor.

It is found in the cytoplasm. It catalyses the reaction Endonucleolytic cleavage to 5'-phosphomonoester.. Its function is as follows. Endonuclease that specifically degrades the RNA of RNA-DNA hybrids. In Prochlorococcus marinus (strain MIT 9313), this protein is Ribonuclease HII.